We begin with the raw amino-acid sequence, 383 residues long: Lipoyl synthase, mitochondrial (383 aa).

Residues 25–34 (STPSLLQTLD) are compositionally biased toward polar residues. A disordered region spans residues 25 to 44 (STPSLLQTLDPSVPSPPAAG). Residues Cys-110, Cys-115, Cys-121, Cys-141, Cys-145, Cys-148, and Ser-357 each contribute to the [4Fe-4S] cluster site. One can recognise a Radical SAM core domain in the interval 126 to 346 (ETGTATATIM…RALGVEMGFR (221 aa)).

The protein belongs to the radical SAM superfamily. Lipoyl synthase family. [4Fe-4S] cluster serves as cofactor.

The protein localises to the mitochondrion. It carries out the reaction [[Fe-S] cluster scaffold protein carrying a second [4Fe-4S](2+) cluster] + N(6)-octanoyl-L-lysyl-[protein] + 2 oxidized [2Fe-2S]-[ferredoxin] + 2 S-adenosyl-L-methionine + 4 H(+) = [[Fe-S] cluster scaffold protein] + N(6)-[(R)-dihydrolipoyl]-L-lysyl-[protein] + 4 Fe(3+) + 2 hydrogen sulfide + 2 5'-deoxyadenosine + 2 L-methionine + 2 reduced [2Fe-2S]-[ferredoxin]. It participates in protein modification; protein lipoylation via endogenous pathway; protein N(6)-(lipoyl)lysine from octanoyl-[acyl-carrier-protein]: step 2/2. Its function is as follows. Catalyzes the radical-mediated insertion of two sulfur atoms into the C-6 and C-8 positions of the octanoyl moiety bound to the lipoyl domains of lipoate-dependent enzymes, thereby converting the octanoylated domains into lipoylated derivatives. The chain is Lipoyl synthase, mitochondrial from Zea mays (Maize).